The sequence spans 384 residues: Glutamate 5-kinase (384 aa).

Lys24 is an ATP binding site. 3 residues coordinate substrate: Ser64, Asp149, and Asn161. ATP is bound by residues 181–182 and 223–229; these read TD and TGGMRTK. The region spanning 288 to 370 is the PUA domain; it reads PGAILIDAGA…RDIQPLLGYT (83 aa).

Belongs to the glutamate 5-kinase family.

It is found in the cytoplasm. It catalyses the reaction L-glutamate + ATP = L-glutamyl 5-phosphate + ADP. Its pathway is amino-acid biosynthesis; L-proline biosynthesis; L-glutamate 5-semialdehyde from L-glutamate: step 1/2. In terms of biological role, catalyzes the transfer of a phosphate group to glutamate to form L-glutamate 5-phosphate. The protein is Glutamate 5-kinase of Xylella fastidiosa (strain 9a5c).